Consider the following 337-residue polypeptide: MGHAHAPRRGSLGYSPRVRARSQKPKMRNWAELGDQPKIQGFVGFKAGMSHIVMVDDRPHSATEGMEISVPVTIVEAPQMHVAGIRVYDDSPYGKKVIGEAWISDLKMLESLTHLPKNGYKTDEQLAKIAELVKKGVVADLRVMTVTLTSEVSGIPKKVPELMENRIAGGDMAKRFEFAKSLMGKAVGIKDVFAPGELVDVSAITKGYGTQGPVVRWGIATQKRKHARTGKKRHVGNLGPWNPHRIRWQVPQLGQTGYHQRTEYNKRILKMGDKAEEITPAGGFLHYGLIRNDYIMLKGSIPGPVKRMVRIRPAVRPKNMPKQAPEITYLSTQSKMG.

Residues 1–26 (MGHAHAPRRGSLGYSPRVRARSQKPK) are disordered.

This sequence belongs to the universal ribosomal protein uL3 family. Part of the 50S ribosomal subunit. Forms a cluster with proteins L14 and L24e.

In terms of biological role, one of the primary rRNA binding proteins, it binds directly near the 3'-end of the 23S rRNA, where it nucleates assembly of the 50S subunit. The sequence is that of Large ribosomal subunit protein uL3 from Methanocella arvoryzae (strain DSM 22066 / NBRC 105507 / MRE50).